Here is a 275-residue protein sequence, read N- to C-terminus: Large ribosomal subunit protein uL2 (275 aa).

A disordered region spans residues G222–K257. A compositionally biased stretch (polar residues) spans K240–N250.

Belongs to the universal ribosomal protein uL2 family. As to quaternary structure, part of the 50S ribosomal subunit. Forms a bridge to the 30S subunit in the 70S ribosome.

One of the primary rRNA binding proteins. Required for association of the 30S and 50S subunits to form the 70S ribosome, for tRNA binding and peptide bond formation. It has been suggested to have peptidyltransferase activity; this is somewhat controversial. Makes several contacts with the 16S rRNA in the 70S ribosome. The protein is Large ribosomal subunit protein uL2 of Endomicrobium trichonymphae.